Reading from the N-terminus, the 271-residue chain is 3-methyl-2-oxobutanoate hydroxymethyltransferase (271 aa).

Mg(2+) contacts are provided by aspartate 53 and aspartate 92. 3-methyl-2-oxobutanoate is bound by residues 53–54, aspartate 92, and lysine 120; that span reads DS. Glutamate 122 is a binding site for Mg(2+). Glutamate 189 serves as the catalytic Proton acceptor.

It belongs to the PanB family. Homodecamer; pentamer of dimers. The cofactor is Mg(2+).

It localises to the cytoplasm. The enzyme catalyses 3-methyl-2-oxobutanoate + (6R)-5,10-methylene-5,6,7,8-tetrahydrofolate + H2O = 2-dehydropantoate + (6S)-5,6,7,8-tetrahydrofolate. Its pathway is cofactor biosynthesis; (R)-pantothenate biosynthesis; (R)-pantoate from 3-methyl-2-oxobutanoate: step 1/2. Catalyzes the reversible reaction in which hydroxymethyl group from 5,10-methylenetetrahydrofolate is transferred onto alpha-ketoisovalerate to form ketopantoate. The protein is 3-methyl-2-oxobutanoate hydroxymethyltransferase of Paraburkholderia phytofirmans (strain DSM 17436 / LMG 22146 / PsJN) (Burkholderia phytofirmans).